The sequence spans 347 residues: 3-isopropylmalate dehydrogenase (347 aa).

Positions 94, 104, 128, and 219 each coordinate substrate. Positions 219, 243, and 247 each coordinate Mg(2+). Residue 279–291 participates in NAD(+) binding; it reads GSAPDIAGQGKAD.

This sequence belongs to the isocitrate and isopropylmalate dehydrogenases family. LeuB type 2 subfamily. Homodimer. Mg(2+) is required as a cofactor. It depends on Mn(2+) as a cofactor.

Its subcellular location is the cytoplasm. It carries out the reaction (2R,3S)-3-isopropylmalate + NAD(+) = 4-methyl-2-oxopentanoate + CO2 + NADH. It participates in amino-acid biosynthesis; L-leucine biosynthesis; L-leucine from 3-methyl-2-oxobutanoate: step 3/4. Catalyzes the oxidation of 3-carboxy-2-hydroxy-4-methylpentanoate (3-isopropylmalate) to 3-carboxy-4-methyl-2-oxopentanoate. The product decarboxylates to 4-methyl-2 oxopentanoate. The sequence is that of 3-isopropylmalate dehydrogenase from Streptomyces griseus subsp. griseus (strain JCM 4626 / CBS 651.72 / NBRC 13350 / KCC S-0626 / ISP 5235).